We begin with the raw amino-acid sequence, 155 residues long: Small ribosomal subunit protein uS7 (155 aa).

It belongs to the universal ribosomal protein uS7 family. In terms of assembly, part of the 30S ribosomal subunit. Contacts proteins S9 and S11.

In terms of biological role, one of the primary rRNA binding proteins, it binds directly to 16S rRNA where it nucleates assembly of the head domain of the 30S subunit. Is located at the subunit interface close to the decoding center, probably blocks exit of the E-site tRNA. In Lactococcus lactis subsp. lactis (strain IL1403) (Streptococcus lactis), this protein is Small ribosomal subunit protein uS7.